A 159-amino-acid chain; its full sequence is Ribosomal RNA large subunit methyltransferase H (159 aa).

Residues L76, G108, and 127–132 (FSKMTF) contribute to the S-adenosyl-L-methionine site.

This sequence belongs to the RNA methyltransferase RlmH family. Homodimer.

The protein resides in the cytoplasm. The enzyme catalyses pseudouridine(1915) in 23S rRNA + S-adenosyl-L-methionine = N(3)-methylpseudouridine(1915) in 23S rRNA + S-adenosyl-L-homocysteine + H(+). Its function is as follows. Specifically methylates the pseudouridine at position 1915 (m3Psi1915) in 23S rRNA. This is Ribosomal RNA large subunit methyltransferase H from Oceanobacillus iheyensis (strain DSM 14371 / CIP 107618 / JCM 11309 / KCTC 3954 / HTE831).